The primary structure comprises 495 residues: Ribose import ATP-binding protein RbsA 3 (495 aa).

ABC transporter domains follow at residues 5 to 240 (VRLR…VGRE) and 250 to 492 (AEIG…TGVK). 37–44 (GENGAGKS) provides a ligand contact to ATP.

This sequence belongs to the ABC transporter superfamily. Ribose importer (TC 3.A.1.2.1) family. In terms of assembly, the complex is composed of an ATP-binding protein (RbsA), two transmembrane proteins (RbsC) and a solute-binding protein (RbsB).

It localises to the cell membrane. It catalyses the reaction D-ribose(out) + ATP + H2O = D-ribose(in) + ADP + phosphate + H(+). Functionally, part of the ABC transporter complex RbsABC involved in ribose import. Responsible for energy coupling to the transport system. The polypeptide is Ribose import ATP-binding protein RbsA 3 (Rubrobacter xylanophilus (strain DSM 9941 / JCM 11954 / NBRC 16129 / PRD-1)).